Reading from the N-terminus, the 511-residue chain is Membrane-bound lytic murein transglycosylase F (511 aa).

Positions 1–19 are cleaved as a signal peptide; the sequence is MKKLKINYLLIGIVTLLLA. Residues 20–269 are non-LT domain; the sequence is AALWPSIPWS…RLEEKYLGHG (250 aa). The segment at 270–511 is LT domain; that stretch reads NDFDYVDTRT…ARMKLPGHLY (242 aa). Glu-314 is a catalytic residue.

This sequence in the N-terminal section; belongs to the bacterial solute-binding protein 3 family. It in the C-terminal section; belongs to the transglycosylase Slt family.

It is found in the cell outer membrane. The enzyme catalyses Exolytic cleavage of the (1-&gt;4)-beta-glycosidic linkage between N-acetylmuramic acid (MurNAc) and N-acetylglucosamine (GlcNAc) residues in peptidoglycan, from either the reducing or the non-reducing ends of the peptidoglycan chains, with concomitant formation of a 1,6-anhydrobond in the MurNAc residue.. In terms of biological role, murein-degrading enzyme that degrades murein glycan strands and insoluble, high-molecular weight murein sacculi, with the concomitant formation of a 1,6-anhydromuramoyl product. Lytic transglycosylases (LTs) play an integral role in the metabolism of the peptidoglycan (PG) sacculus. Their lytic action creates space within the PG sacculus to allow for its expansion as well as for the insertion of various structures such as secretion systems and flagella. The protein is Membrane-bound lytic murein transglycosylase F of Klebsiella pneumoniae subsp. pneumoniae (strain ATCC 700721 / MGH 78578).